Consider the following 369-residue polypeptide: Chaperone protein DnaJ (369 aa).

A J domain is found at 5–70 (DYYEVLGVGR…NKRAAYDQFG (66 aa)). The segment at 128–206 (GAETQIRIPR…CHGAGWVKRQ (79 aa)) adopts a CR-type zinc-finger fold. Zn(2+)-binding residues include Cys-141, Cys-144, Cys-158, Cys-161, Cys-180, Cys-183, Cys-194, and Cys-197. 4 CXXCXGXG motif repeats span residues 141 to 148 (CDTCHGSG), 158 to 165 (CPTCNGHG), 180 to 187 (CSHCQGSG), and 194 to 201 (CGDCHGAG).

This sequence belongs to the DnaJ family. In terms of assembly, homodimer. Zn(2+) is required as a cofactor.

The protein localises to the cytoplasm. Its function is as follows. Participates actively in the response to hyperosmotic and heat shock by preventing the aggregation of stress-denatured proteins and by disaggregating proteins, also in an autonomous, DnaK-independent fashion. Unfolded proteins bind initially to DnaJ; upon interaction with the DnaJ-bound protein, DnaK hydrolyzes its bound ATP, resulting in the formation of a stable complex. GrpE releases ADP from DnaK; ATP binding to DnaK triggers the release of the substrate protein, thus completing the reaction cycle. Several rounds of ATP-dependent interactions between DnaJ, DnaK and GrpE are required for fully efficient folding. Also involved, together with DnaK and GrpE, in the DNA replication of plasmids through activation of initiation proteins. In Nitrosomonas europaea (strain ATCC 19718 / CIP 103999 / KCTC 2705 / NBRC 14298), this protein is Chaperone protein DnaJ.